The following is a 476-amino-acid chain: 3-isopropylmalate dehydratase large subunit (476 aa).

3 residues coordinate [4Fe-4S] cluster: Cys357, Cys417, and Cys420.

Belongs to the aconitase/IPM isomerase family. LeuC type 1 subfamily. In terms of assembly, heterodimer of LeuC and LeuD. [4Fe-4S] cluster is required as a cofactor.

The catalysed reaction is (2R,3S)-3-isopropylmalate = (2S)-2-isopropylmalate. The protein operates within amino-acid biosynthesis; L-leucine biosynthesis; L-leucine from 3-methyl-2-oxobutanoate: step 2/4. In terms of biological role, catalyzes the isomerization between 2-isopropylmalate and 3-isopropylmalate, via the formation of 2-isopropylmaleate. The protein is 3-isopropylmalate dehydratase large subunit of Mycolicibacterium paratuberculosis (strain ATCC BAA-968 / K-10) (Mycobacterium paratuberculosis).